Reading from the N-terminus, the 620-residue chain is 1-deoxy-D-xylulose-5-phosphate synthase (620 aa).

Thiamine diphosphate is bound by residues histidine 80 and 121–123; that span reads GHS. Aspartate 152 contributes to the Mg(2+) binding site. Thiamine diphosphate is bound by residues 153–154, asparagine 181, tyrosine 288, and glutamate 370; that span reads GA. Asparagine 181 serves as a coordination point for Mg(2+).

This sequence belongs to the transketolase family. DXPS subfamily. In terms of assembly, homodimer. It depends on Mg(2+) as a cofactor. Thiamine diphosphate is required as a cofactor.

It catalyses the reaction D-glyceraldehyde 3-phosphate + pyruvate + H(+) = 1-deoxy-D-xylulose 5-phosphate + CO2. Its pathway is metabolic intermediate biosynthesis; 1-deoxy-D-xylulose 5-phosphate biosynthesis; 1-deoxy-D-xylulose 5-phosphate from D-glyceraldehyde 3-phosphate and pyruvate: step 1/1. Functionally, catalyzes the acyloin condensation reaction between C atoms 2 and 3 of pyruvate and glyceraldehyde 3-phosphate to yield 1-deoxy-D-xylulose-5-phosphate (DXP). In Shigella boydii serotype 18 (strain CDC 3083-94 / BS512), this protein is 1-deoxy-D-xylulose-5-phosphate synthase.